Reading from the N-terminus, the 429-residue chain is Glutamate-1-semialdehyde 2,1-aminomutase 1 (429 aa).

Lysine 268 bears the N6-(pyridoxal phosphate)lysine mark.

This sequence belongs to the class-III pyridoxal-phosphate-dependent aminotransferase family. HemL subfamily. As to quaternary structure, homodimer. Pyridoxal 5'-phosphate is required as a cofactor.

It is found in the cytoplasm. It catalyses the reaction (S)-4-amino-5-oxopentanoate = 5-aminolevulinate. It participates in porphyrin-containing compound metabolism; protoporphyrin-IX biosynthesis; 5-aminolevulinate from L-glutamyl-tRNA(Glu): step 2/2. The sequence is that of Glutamate-1-semialdehyde 2,1-aminomutase 1 from Lysinibacillus sphaericus (strain C3-41).